The following is a 279-amino-acid chain: Borealin (279 aa).

Positions 135–152 (KTKAKVAAKKPSTARKTR) are enriched in basic residues. Residues 135–180 (KTKAKVAAKKPSTARKTRASTANLTNTSKRTSKRGRATPSASKQIE) are disordered. Polar residues predominate over residues 153 to 163 (ASTANLTNTSK).

It belongs to the borealin family. As to quaternary structure, component of the CPC at least composed of survivin/birc5, incenp, cdca8/borealin and/or cdca9/dasra-A, and aurkb/aurora-B. Interacts with incenp (via N-terminus).

Its subcellular location is the nucleus. The protein resides in the chromosome. It localises to the centromere. It is found in the cytoplasm. The protein localises to the cytoskeleton. Its subcellular location is the spindle. Functionally, component of the chromosomal passenger complex (CPC), a complex that acts as a key regulator of mitosis. The CPC complex has essential functions at the centromere in ensuring correct chromosome alignment and segregation and is required for chromatin-induced microtubule stabilization and spindle assembly. Contributes to CPC function by facilitating loading of the CPC onto chromosomes. The sequence is that of Borealin (cdca8) from Xenopus tropicalis (Western clawed frog).